The following is a 241-amino-acid chain: DNA repair protein RecO (241 aa).

The protein belongs to the RecO family.

In terms of biological role, involved in DNA repair and RecF pathway recombination. This chain is DNA repair protein RecO, found in Dinoroseobacter shibae (strain DSM 16493 / NCIMB 14021 / DFL 12).